The sequence spans 145 residues: Globin (145 aa).

The residue at position 2 (Ser2) is an N-acetylserine. Positions 2–145 (SLSAAEADLV…IVAALKAAGK (144 aa)) constitute a Globin domain. His96 contributes to the heme b binding site.

It belongs to the globin family. As to quaternary structure, monomer.

In Aplysia kurodai (Kuroda's sea hare), this protein is Globin.